Here is a 246-residue protein sequence, read N- to C-terminus: tRNA pseudouridine synthase A (246 aa).

The active-site Nucleophile is the Asp-51. Tyr-105 is a substrate binding site.

Belongs to the tRNA pseudouridine synthase TruA family.

It catalyses the reaction uridine(38/39/40) in tRNA = pseudouridine(38/39/40) in tRNA. Its function is as follows. Formation of pseudouridine at positions 38, 39 and 40 in the anticodon stem and loop of transfer RNAs. This is tRNA pseudouridine synthase A from Thermoplasma volcanium (strain ATCC 51530 / DSM 4299 / JCM 9571 / NBRC 15438 / GSS1).